Consider the following 1373-residue polypeptide: DNA-directed RNA polymerase subunit beta'' (1373 aa).

The Zn(2+) site is built by Cys224, Cys296, Cys303, and Cys306.

The protein belongs to the RNA polymerase beta' chain family. RpoC2 subfamily. In terms of assembly, in plastids the minimal PEP RNA polymerase catalytic core is composed of four subunits: alpha, beta, beta', and beta''. When a (nuclear-encoded) sigma factor is associated with the core the holoenzyme is formed, which can initiate transcription. Zn(2+) is required as a cofactor.

It is found in the plastid. It localises to the chloroplast. It catalyses the reaction RNA(n) + a ribonucleoside 5'-triphosphate = RNA(n+1) + diphosphate. In terms of biological role, DNA-dependent RNA polymerase catalyzes the transcription of DNA into RNA using the four ribonucleoside triphosphates as substrates. The chain is DNA-directed RNA polymerase subunit beta'' from Amborella trichopoda.